Reading from the N-terminus, the 1232-residue chain is Dynactin subunit 1 (1232 aa).

The region spanning 31-73 is the CAP-Gly domain; the sequence is GATLFATGKWVGVILDDSKGKNDGTVQGRRYFTCEENHGIFVR. Disordered stretches follow at residues 82-183 and 339-358; these read DGAD…AQVK and SASEKQEHIKVQKQMEKKNT. The segment covering 86-95 has biased composition (low complexity); that stretch reads TTSPETPEPT. Positions 108–117 are enriched in polar residues; it reads PKSSKLPTRP. A compositionally biased stretch (low complexity) spans 118 to 130; that stretch reads SSSAASSGTASAS. Residues 133 to 144 show a composition bias toward polar residues; the sequence is EISSSEPSTPAQ. The span at 146–163 shows a compositional bias: low complexity; sequence PLAAPIIPSPSSAITSPV. 4 coiled-coil regions span residues 170 to 505, 908 to 1005, 1046 to 1071, and 1136 to 1166; these read GPSK…KEQQ, ETVI…RTIE, LLLQQIDALRLSMKHLKHENNKLKAH, and AAQLLEQTARLKSLSDTIDKLKNEVMKETVS. Residues 172–183 are compositionally biased toward basic and acidic residues; it reads SKEEENLRAQVK.

This sequence belongs to the dynactin 150 kDa subunit family. Monomer and homodimer. Subunit of dynactin, a multiprotein complex part of a tripartite complex with dynein and a adapter, such as BICDL1, BICD2 or HOOK3. The dynactin complex is built around ACTR1A/ACTB filament and consists of an actin-related filament composed of a shoulder domain, a pointed end and a barbed end. Its length is defined by its flexible shoulder domain. The soulder is composed of 2 DCTN1 subunits, 4 DCTN2 and 2 DCTN3. DCTN1/p150(glued) binds directly to microtubules and to cytoplasmic dynein.

Its subcellular location is the cytoplasm. The protein localises to the cytoskeleton. It localises to the microtubule organizing center. It is found in the centrosome. The protein resides in the centriole. Its subcellular location is the spindle. The protein localises to the cell cortex. In terms of biological role, part of the dynactin complex that activates the molecular motor dynein for ultra-processive transport along microtubules. Plays a key role in dynein-mediated retrograde transport of vesicles and organelles along microtubules by recruiting and tethering dynein to microtubules. Binds to both dynein and microtubules providing a link between specific cargos, microtubules and dynein. Essential for targeting dynein to microtubule plus ends, recruiting dynein to membranous cargos and enhancing dynein processivity (the ability to move along a microtubule for a long distance without falling off the track). Can also act as a brake to slow the dynein motor during motility along the microtubule. Can regulate microtubule stability by promoting microtubule formation, nucleation and polymerization and by inhibiting microtubule catastrophe in neurons. Inhibits microtubule catastrophe by binding both to microtubules and to tubulin, leading to enhanced microtubule stability along the axon. Plays a role in metaphase spindle orientation. Plays a role in centriole cohesion and subdistal appendage organization and function. Its recruitment to the centriole in a KIF3A-dependent manner is essential for the maintenance of centriole cohesion and the formation of subdistal appendage. Also required for microtubule anchoring at the mother centriole. Plays a role in primary cilia formation. In Xenopus laevis (African clawed frog), this protein is Dynactin subunit 1 (dctn1).